Here is a 316-residue protein sequence, read N- to C-terminus: 4-hydroxy-3-methylbut-2-enyl diphosphate reductase (316 aa).

[4Fe-4S] cluster is bound at residue Cys-12. Residues His-41 and His-74 each contribute to the (2E)-4-hydroxy-3-methylbut-2-enyl diphosphate site. The dimethylallyl diphosphate site is built by His-41 and His-74. Positions 41 and 74 each coordinate isopentenyl diphosphate. Cys-96 serves as a coordination point for [4Fe-4S] cluster. Residue His-124 coordinates (2E)-4-hydroxy-3-methylbut-2-enyl diphosphate. His-124 lines the dimethylallyl diphosphate pocket. His-124 lines the isopentenyl diphosphate pocket. The Proton donor role is filled by Glu-126. Position 169 (Thr-169) interacts with (2E)-4-hydroxy-3-methylbut-2-enyl diphosphate. A [4Fe-4S] cluster-binding site is contributed by Cys-199. Residues Ser-227, Ser-228, Asn-229, and Ser-271 each contribute to the (2E)-4-hydroxy-3-methylbut-2-enyl diphosphate site. Dimethylallyl diphosphate-binding residues include Ser-227, Ser-228, Asn-229, and Ser-271. Isopentenyl diphosphate-binding residues include Ser-227, Ser-228, Asn-229, and Ser-271.

This sequence belongs to the IspH family. [4Fe-4S] cluster serves as cofactor.

The catalysed reaction is isopentenyl diphosphate + 2 oxidized [2Fe-2S]-[ferredoxin] + H2O = (2E)-4-hydroxy-3-methylbut-2-enyl diphosphate + 2 reduced [2Fe-2S]-[ferredoxin] + 2 H(+). The enzyme catalyses dimethylallyl diphosphate + 2 oxidized [2Fe-2S]-[ferredoxin] + H2O = (2E)-4-hydroxy-3-methylbut-2-enyl diphosphate + 2 reduced [2Fe-2S]-[ferredoxin] + 2 H(+). It participates in isoprenoid biosynthesis; dimethylallyl diphosphate biosynthesis; dimethylallyl diphosphate from (2E)-4-hydroxy-3-methylbutenyl diphosphate: step 1/1. It functions in the pathway isoprenoid biosynthesis; isopentenyl diphosphate biosynthesis via DXP pathway; isopentenyl diphosphate from 1-deoxy-D-xylulose 5-phosphate: step 6/6. Catalyzes the conversion of 1-hydroxy-2-methyl-2-(E)-butenyl 4-diphosphate (HMBPP) into a mixture of isopentenyl diphosphate (IPP) and dimethylallyl diphosphate (DMAPP). Acts in the terminal step of the DOXP/MEP pathway for isoprenoid precursor biosynthesis. This Vibrio vulnificus (strain CMCP6) protein is 4-hydroxy-3-methylbut-2-enyl diphosphate reductase.